The sequence spans 571 residues: Dual specificity testis-specific protein kinase 2 (571 aa).

The Protein kinase domain occupies 58 to 313 (DFTCEKIGSG…EIGKTLEEIL (256 aa)). Residues 64–72 (IGSGFFSEV) and lysine 87 contribute to the ATP site. The active-site Proton acceptor is aspartate 176. Serine 219 carries the phosphoserine; by autocatalysis modification. Serine 369, serine 456, and serine 460 each carry phosphoserine. Residues 521 to 571 (ENGFGSRPQGTSPCPAGASEEMEVEERPAGSTPATFSTSGIGLQTQGKQDG) form a disordered region. Positions 552 to 571 (TPATFSTSGIGLQTQGKQDG) are enriched in polar residues.

This sequence belongs to the protein kinase superfamily. TKL Ser/Thr protein kinase family. Requires Mg(2+) as cofactor. It depends on Mn(2+) as a cofactor. As to expression, predominantly expressed in testis and prostate. Found predominantly in non-germinal Sertoli cells.

Its subcellular location is the nucleus. It carries out the reaction L-seryl-[protein] + ATP = O-phospho-L-seryl-[protein] + ADP + H(+). It catalyses the reaction L-threonyl-[protein] + ATP = O-phospho-L-threonyl-[protein] + ADP + H(+). The catalysed reaction is L-tyrosyl-[protein] + ATP = O-phospho-L-tyrosyl-[protein] + ADP + H(+). Its activity is regulated as follows. Activated by autophosphorylation on Ser-219. Dual specificity protein kinase activity catalyzing autophosphorylation and phosphorylation of exogenous substrates on both serine/threonine and tyrosine residues. Phosphorylates cofilin at 'Ser-3'. May play an important role in spermatogenesis. This chain is Dual specificity testis-specific protein kinase 2 (TESK2), found in Homo sapiens (Human).